The following is a 776-amino-acid chain: Hepatocyte growth factor-regulated tyrosine kinase substrate (776 aa).

Positions 15–143 (ATSQLLLETD…IMKVEGHVFP (129 aa)) constitute a VHS domain. The segment at 160–220 (WVDAEECHRC…VCEPCYEQLN (61 aa)) adopts an FYVE-type zinc-finger fold. The Zn(2+) site is built by Cys166, Cys169, Cys182, Cys185, Cys190, and Cys193. Lys207 carries the N6-acetyllysine modification. Positions 212 and 215 each coordinate Zn(2+). Tyr216 carries the post-translational modification Phosphotyrosine. The tract at residues 223–319 (AEGKAASTTE…SPVNSSAPLA (97 aa)) is disordered. An interaction with SNX1 region spans residues 225 to 542 (GKAASTTELP…QRLQEQEKER (318 aa)). A UIM domain is found at 258 to 277 (QEEEELQLALALSQSEAEEK). A compositionally biased stretch (low complexity) spans 294–311 (PAPLASSAPPAGSLYSSP). Tyr308, Tyr329, and Tyr334 each carry phosphotyrosine. Residues 338 to 401 (KQEEARKSPT…SEQYQNGESE (64 aa)) form a disordered region. The span at 379–398 (TDSQPITSCSGPFSEQYQNG) shows a compositional bias: polar residues. Residues 444 to 542 (SINSTHPQLL…QRLQEQEKER (99 aa)) form an interaction with SNAP25 and TRAK2 region. Positions 453–571 (LELLNRLDER…FPLPYAQLQA (119 aa)) are interaction with STAM. The segment at 479 to 776 (ARGALSALRE…GNETQLISFD (298 aa)) is interaction with NF2. Residue Lys550 is modified to N6-succinyllysine. Residues 719 to 776 (GQDASLPAQQPYITGQQPMYQQMAPSTGPPQQQPPVAQPPPTQGPPAQGNETQLISFD) are disordered. Residues 725–743 (PAQQPYITGQQPMYQQMAP) show a composition bias toward polar residues. Residues 745-762 (TGPPQQQPPVAQPPPTQG) show a composition bias toward pro residues. Polar residues predominate over residues 767–776 (GNETQLISFD).

Component of the ESCRT-0 complex composed of STAM or STAM2 and HGS. Part of a complex at least composed of HSG, STAM2 (or probably STAM) and EPS15. Interacts with STAM. Interacts with STAM2. Interacts with EPS15; the interaction is direct, calcium-dependent and inhibited by SNAP25. Identified in a complex with STAM and LITAF. Found in a complex with STAM and E3 ligase ITCH and DTX3L. Interacts with E3 ligase DTX3L; the interaction brings together STAM and HSG, promotes their recruitment to early endosomes and decreases STAM and HGS ubiquitination by ITCH. Interacts with NF2; the interaction is direct. Interacts with ubiquitin; the interaction is direct. Interacts with VPS37C. Interacts with SMAD1, SMAD2 and SMAD3. Interacts with TSG101; the interaction mediates the association with the ESCRT-I complex. Interacts with SNAP25; the interaction is direct and decreases with addition of increasing concentrations of free calcium. Interacts with SNX1; the interaction is direct. Component of a 550 kDa membrane complex at least composed of HGS and SNX1 but excluding EGFR. Interacts with TRAK2. Interacts with TRAK1. Component of the CART complex, at least composed of ACTN4, HGS/HRS, MYO5B and TRIM3. Interacts (via UIM domain) with UBQLN1 (via ubiquitin-like domain). Interacts with ARRDC3. Identified in a complex containing at least ARRDC4, AVPR2 and HGS. Interacts with LAPTM4B; promotes HGS ubiquitination. Post-translationally, phosphorylated on Tyr-334. This phosphorylation occurs in response to EGF. A minor site of phosphorylation on Tyr-329 is detected. Protein phosphorylation may also be triggered in response to IL-2, GM-CSF and HGF. In terms of processing, ubiquitinated by ITCH. In terms of tissue distribution, ubiquitously expressed.

It localises to the cytoplasm. The protein resides in the early endosome membrane. It is found in the endosome. Its subcellular location is the multivesicular body membrane. Functionally, involved in intracellular signal transduction mediated by cytokines and growth factors. When associated with STAM, it suppresses DNA signaling upon stimulation by IL-2 and GM-CSF. Could be a direct effector of PI3-kinase in vesicular pathway via early endosomes and may regulate trafficking to early and late endosomes by recruiting clathrin. May concentrate ubiquitinated receptors within clathrin-coated regions. Involved in down-regulation of receptor tyrosine kinase via multivesicular body (MVBs) when complexed with STAM (ESCRT-0 complex). The ESCRT-0 complex binds ubiquitin and acts as a sorting machinery that recognizes ubiquitinated receptors and transfers them to further sequential lysosomal sorting/trafficking processes. Involved in receptor recycling via its association with the CART complex, a multiprotein complex required for efficient transferrin receptor recycling but not for EGFR degradation. May contribute to the efficient recruitment of SMADs to the activin receptor complex. In Rattus norvegicus (Rat), this protein is Hepatocyte growth factor-regulated tyrosine kinase substrate (Hgs).